Reading from the N-terminus, the 304-residue chain is Probable WRKY transcription factor 29 (304 aa).

2 disordered regions span residues 76–96 and 185–236; these read LPEDSKPFRDDKKQRSHGCLL and YTNE…IPSA. Positions 78–88 are enriched in basic and acidic residues; that stretch reads EDSKPFRDDKK. Residues 128–194 constitute a DNA-binding region (WRKY); sequence KEENLLSDAW…YTNEHNHELP (67 aa). 2 stretches are compositionally biased toward polar residues: residues 196 to 213 and 225 to 236; these read RRNSLAGSTRAKTSQPKP and SSPTSNPMIPSA.

The protein belongs to the WRKY group II-e family.

The protein resides in the nucleus. Its function is as follows. Transcription factor involved in the expression of defense genes in innate immune response of plants. Interacts specifically with the W box (5'-(T)TGAC[CT]-3'), a frequently occurring elicitor-responsive cis-acting element. Activates WRKY 22, SIRK and its own promoters. This chain is Probable WRKY transcription factor 29 (WRKY29), found in Arabidopsis thaliana (Mouse-ear cress).